A 2036-amino-acid chain; its full sequence is Transmembrane channel-like protein (2036 aa).

Disordered stretches follow at residues 1–178 and 194–243; these read MQND…IDDE and SVRG…ESTQ. Residues 1 to 353 lie on the Cytoplasmic side of the membrane; the sequence is MQNDEEPAAA…GVASYFTFLR (353 aa). Over residues 58–73 the composition is skewed to low complexity; it reads VGSSSSNGNTSNVATG. A compositionally biased stretch (polar residues) spans 74-90; sequence ANSENNSGVTSPHQLSV. Positions 125-134 are enriched in basic and acidic residues; sequence ASQEDHRSYE. Residues 166 to 178 are compositionally biased toward acidic residues; it reads FDEDGGGGDIDDE. Residues 198–208 show a composition bias toward basic residues; the sequence is YRGKRGSRSSR. Basic and acidic residues predominate over residues 216–225; sequence HVLDSVERRR. The span at 227 to 243 shows a compositional bias: polar residues; it reads SVYTTSSEEGTNQESTQ. The helical transmembrane segment at 354 to 374 threads the bilayer; that stretch reads WLMWVNIMIAIPLVAFVIGPE. Residues 375–395 lie on the Extracellular side of the membrane; sequence YFATKHGETDPRKRMSDPEAR. The helical transmembrane segment at 396 to 418 threads the bilayer; sequence VAGNLFTFWEFEGYLKYSPMFYG. The Cytoplasmic segment spans residues 419–432; the sequence is YYSSTSGISTSGYK. Residues 433-453 form a helical membrane-spanning segment; that stretch reads LPLAYFLTAVLVYIYSFVATL. At 454 to 526 the chain is on the extracellular side; sequence RKMAENSRNS…NRNWRVILQR (73 aa). Residues 527–547 traverse the membrane as a helical segment; that stretch reads ILVNILVMGLLGLSGATVVLL. The Cytoplasmic segment spans residues 548-567; it reads VNHSEDLAKHDNWLSRNAVN. A helical membrane pass occupies residues 568–588; sequence VTMTLLSFFLPMIFEALGLFE. Topologically, residues 589-599 are extracellular; the sequence is NWHPRQQLRLQ. The helical transmembrane segment at 600-620 threads the bilayer; sequence LARIMILNMLNLYSLMFSFIY. Residues 621 to 1308 are Cytoplasmic-facing; the sequence is KINSKEKPLQ…ILTLINNQGQ (688 aa). Disordered regions lie at residues 789–839, 860–967, 996–1027, 1066–1143, and 1186–1205; these read TTAT…TEAT, KPLG…TDQA, FFTS…NATP, LRGR…EGSE, and GSTT…KQLT. A compositionally biased stretch (polar residues) spans 870–885; it reads IPNSTTNSATLSTIPA. Residues 886–906 are compositionally biased toward low complexity; the sequence is TLNTTNLPLNSTTKLTTTTST. A compositionally biased stretch (polar residues) spans 933 to 952; it reads TSDAPDNNSYSDITDYSSEP. Positions 953–967 are enriched in acidic residues; that stretch reads SEIEDFDEQESTDQA. Composition is skewed to low complexity over residues 1069-1083, 1091-1100, and 1107-1130; these read RITT…STTT, RTTTTELTST, and TTES…SSST. A helical membrane pass occupies residues 1309 to 1329; that stretch reads VWMGIFFSPGLVLINLVKLMI. Over 1330–1358 the chain is Extracellular; that stretch reads MMYFRSWIVLTCNVPHEVVFKASKSNNFY. Residues 1359 to 1379 form a helical membrane-spanning segment; it reads LSLLLTMLFLCVLPVGYAIVW. The Cytoplasmic portion of the chain corresponds to 1380 to 1423; it reads LRPSWHCGPFSEYNRIAEFITNTTRNALPKQLHEPLDYLTSSST. Residues 1424-1444 form a helical membrane-spanning segment; the sequence is VIPLLLLLILIIYYLVSLTGA. Residues 1445–2036 are Extracellular-facing; the sequence is LREANQDLRT…RIDIENEHEK (592 aa). Disordered regions lie at residues 1527 to 1572, 1592 to 1841, and 1859 to 1990; these read LRKG…SRLQ, ERAR…SRQG, and KKDD…IPTI. Basic and acidic residues-rich tracts occupy residues 1538–1566, 1614–1640, 1658–1668, 1727–1743, and 1777–1793; these read SFVR…DKRF, KETH…DKKD, SPKDNEHDPDT, HIVD…EDKP, and PEPE…ERSS. The span at 1806–1838 shows a compositional bias: polar residues; that stretch reads NEPSGTEEQDRSLPSPTPSQGQGHHQRQLSVLS. Over residues 1890-1899 the composition is skewed to low complexity; it reads VLSSVSSSTA. The segment covering 1903 to 1914 has biased composition (pro residues); sequence PPTPEPESPTPS. The span at 1976–1990 shows a compositional bias: polar residues; the sequence is QDSQSSIWSDNIPTI.

Belongs to the TMC family. Expressed in multi-dendritic neurons of the labellum (md-L), which extend elaborate dendritic arbors innervating the bases of taste hairs (at protein level). In larvae, expressed in class I and class II dendritic arborization (da) neurons and bipolar dendrite (bd) neurons (at protein level). In adults, expressed in various sensory neurons including those in the mouth parts, olfactory neurons in the antenna, wing bristle neurons, haltere neurons, arista neurons, and many other sensory neurons, including a subset of chordotonal (Cho) neurons. Expressed in md-L axon terminals, including those that project into the subesophageal zone (SEZ). Also expressed in a small number of local neurons in the adult ventral nerve cord (VNC), and projections extending from a few neurons in the legs or wing hinges. In the adult mouth, expressed in a few multi-dendritic neurons of the ventral cibarial sensory organ (VCSO); the multiple elaborate dendritic branches form a brush-like structure that faces the luminal side of the food-passing tunnel. Also expressed in the oviduct and uterus of adult females.

It localises to the cell membrane. It is found in the cell projection. The protein localises to the dendrite. Probable ion channel. Component of mechanosensitive neurons that participates in proprioception, sensing food texture, and directing egg-laying site selection (oviposition). Component of multi-dendritic neurons of the labellum (md-L) where it is required for sensing the hardness and viscosity of their food, enabling them to behaviorally discriminate their preferred softness and smoothness from harder and stickier food options. Required as part of oviposition site selection process to relay mechanosensory and chemosensory information on the hardness and sweetness of potential egg-laying substrates, thus ensuring females select the most optimal site for their eggs survival. Females determine the softest substrate for their eggs first by making a coarse evaluation of substrate hardness using mechanosensitive channels nan and Piezo in the leg tarsal bristles, followed by a much finer assessment using nan, iav and Tmc mechanosensitive channels on the labellum. This protein is required to sense subtle differences in substrate stiffness (between 0.25% and 0.3% agarose), likely acting in the md-L neurons. Also required in neurons on the labellum, including the md-Ls, and possibly in the brain, to inhibit discrimination of egg-laying substrates of different hardness if the substrate contains sucrose. During oviposition evaluation, activation of sweet neurons by sucrose enhances the activity of the Tmc neurons resulting in females losing their softness preference in favor of egg-laying sites that contain sucrose. Acts in the larvae peripheral sensory neurons, to contribute to proprioception and sensory feedback for normal forward crawling behavior. Required for the normal activity of the proprioceptive sensory dendrites, ddaE which show preferential responses to forward locomotion, and ddaD which show preferential responses to backward locomotion. In Drosophila melanogaster (Fruit fly), this protein is Transmembrane channel-like protein.